We begin with the raw amino-acid sequence, 168 residues long: G/U mismatch-specific DNA glycosylase (168 aa).

This sequence belongs to the uracil-DNA glycosylase (UDG) superfamily. TDG/mug family. Binds DNA as a monomer.

It is found in the cytoplasm. The enzyme catalyses Specifically hydrolyzes mismatched double-stranded DNA and polynucleotides, releasing free uracil.. Excises ethenocytosine and uracil, which can arise by alkylation or deamination of cytosine, respectively, from the corresponding mispairs with guanine in ds-DNA. It is capable of hydrolyzing the carbon-nitrogen bond between the sugar-phosphate backbone of the DNA and the mispaired base. The complementary strand guanine functions in substrate recognition. Required for DNA damage lesion repair in stationary-phase cells. The sequence is that of G/U mismatch-specific DNA glycosylase from Escherichia coli O157:H7 (strain EC4115 / EHEC).